Here is a 392-residue protein sequence, read N- to C-terminus: Gastricsin (392 aa).

An N-terminal signal peptide occupies residues Met-1 to Ala-16. A propeptide spans Ala-17–Tyr-62 (activation peptide). A Peptidase A1 domain is found at Tyr-76–Ala-389. Residue Asp-94 is part of the active site. Intrachain disulfides connect Cys-107–Cys-112 and Cys-270–Cys-275. Asp-280 is a catalytic residue. A disulfide bond links Cys-314 and Cys-347.

It belongs to the peptidase A1 family.

The protein resides in the secreted. It carries out the reaction More restricted specificity than pepsin A, but shows preferential cleavage at Tyr-|-Xaa bonds. High activity on hemoglobin.. Hydrolyzes a variety of proteins. In Mus musculus (Mouse), this protein is Gastricsin (Pgc).